Consider the following 603-residue polypeptide: UvrABC system protein C (603 aa).

The GIY-YIG domain maps to 15-92 (DQPGCYLMKD…IKKHDPRFNI (78 aa)). Positions 197-232 (KTVKNDLMKKMQEAAENMEFEKAGEFRDQINAIETT) constitute a UVR domain.

It belongs to the UvrC family. In terms of assembly, interacts with UvrB in an incision complex.

Its subcellular location is the cytoplasm. In terms of biological role, the UvrABC repair system catalyzes the recognition and processing of DNA lesions. UvrC both incises the 5' and 3' sides of the lesion. The N-terminal half is responsible for the 3' incision and the C-terminal half is responsible for the 5' incision. This Listeria innocua serovar 6a (strain ATCC BAA-680 / CLIP 11262) protein is UvrABC system protein C.